We begin with the raw amino-acid sequence, 372 residues long: MKYDLIIIGSGSVGAAAGYYATRAGLNVLMTDAHMPPHQHGSHHGDTRLIRHAYGEGEKYVPLVLRAQTLWDDLSRHNEDDPIFVRSGVINLGPADSAFLANVAHSAEQWQLNVEKLDAQGIMARWPEIRVPDNYIGLFETDSGFLRSELAIKTWIQLAKEAGCAQLFNCPVTAIRHEDDGVTIETADGEYQAKKAIVCAGTWVKDLLPELPVQPVRKVFAWYQADGRYSVKNKFPAFTGELPNGDQYYGFPAENDALKIGKHNGGLVIHSADERVPFAEVASDGSEAFPFLRNVLPGIGCCLYGAACTYDNSPDEDFIIDTLPGHDNTLLITGLSGHGFKFASVLGEIAADFAQDKKSDFDLTPFRLSRFQ.

4–34 provides a ligand contact to FAD; it reads DLIIIGSGSVGAAAGYYATRAGLNVLMTDAH. An S-8alpha-FAD cysteine modification is found at Cys-308.

This sequence belongs to the MSOX/MTOX family. MTOX subfamily. As to quaternary structure, monomer. FAD serves as cofactor.

It carries out the reaction N(alpha)-methyl-L-tryptophan + O2 + H2O = L-tryptophan + formaldehyde + H2O2. Its function is as follows. Catalyzes the oxidative demethylation of N-methyl-L-tryptophan. The protein is N-methyl-L-tryptophan oxidase of Shigella dysenteriae serotype 1 (strain Sd197).